The following is a 362-amino-acid chain: Probable dual-specificity RNA methyltransferase RlmN (362 aa).

Catalysis depends on Glu-105, which acts as the Proton acceptor. A Radical SAM core domain is found at His-111 to Asp-344. An intrachain disulfide couples Cys-118 to Cys-349. [4Fe-4S] cluster contacts are provided by Cys-125, Cys-129, and Cys-132. S-adenosyl-L-methionine contacts are provided by residues Gly-175–Glu-176, Ser-207, Ser-230–His-232, and Asn-306. Cys-349 serves as the catalytic S-methylcysteine intermediate.

It belongs to the radical SAM superfamily. RlmN family. The cofactor is [4Fe-4S] cluster.

It is found in the cytoplasm. The catalysed reaction is adenosine(2503) in 23S rRNA + 2 reduced [2Fe-2S]-[ferredoxin] + 2 S-adenosyl-L-methionine = 2-methyladenosine(2503) in 23S rRNA + 5'-deoxyadenosine + L-methionine + 2 oxidized [2Fe-2S]-[ferredoxin] + S-adenosyl-L-homocysteine. It carries out the reaction adenosine(37) in tRNA + 2 reduced [2Fe-2S]-[ferredoxin] + 2 S-adenosyl-L-methionine = 2-methyladenosine(37) in tRNA + 5'-deoxyadenosine + L-methionine + 2 oxidized [2Fe-2S]-[ferredoxin] + S-adenosyl-L-homocysteine. Its function is as follows. Specifically methylates position 2 of adenine 2503 in 23S rRNA and position 2 of adenine 37 in tRNAs. The protein is Probable dual-specificity RNA methyltransferase RlmN of Bacillus anthracis (strain CDC 684 / NRRL 3495).